Here is a 91-residue protein sequence, read N- to C-terminus: MARSLKKGPFVADHLLRKVEKLNAKGDKQVIKTWSRASTILPQMIGHTIAVHNGRQHVPVYVTEQMVGHKLGEFAPTRTFRGHTKDKKAGR.

Belongs to the universal ribosomal protein uS19 family.

Protein S19 forms a complex with S13 that binds strongly to the 16S ribosomal RNA. This Synechococcus elongatus (strain ATCC 33912 / PCC 7942 / FACHB-805) (Anacystis nidulans R2) protein is Small ribosomal subunit protein uS19.